Here is a 294-residue protein sequence, read N- to C-terminus: Putative S-adenosyl-L-methionine-dependent methyltransferase RHA1_ro00605 (294 aa).

S-adenosyl-L-methionine is bound by residues D120 and 149 to 150; that span reads DL.

It belongs to the UPF0677 family.

Functionally, exhibits S-adenosyl-L-methionine-dependent methyltransferase activity. In Rhodococcus jostii (strain RHA1), this protein is Putative S-adenosyl-L-methionine-dependent methyltransferase RHA1_ro00605.